A 156-amino-acid chain; its full sequence is Ribonuclease 1B pancreatic (156 aa).

The signal sequence occupies residues 1–28 (MALDKSVIPLPLLVVVLLVLGWAQPSLG). Substrate-binding residues include K35 and R38. The active-site Proton acceptor is the H40. 4 disulfide bridges follow: C54-C112, C68-C123, C86-C138, and C93-C100. An N-linked (GlcNAc...) asparagine glycan is attached at N62. Residues 69–73 (KSVNT), K94, and R113 each bind substrate. The N-linked (GlcNAc...) asparagine glycan is linked to N116. The Proton donor role is filled by H147.

Belongs to the pancreatic ribonuclease family. In terms of assembly, monomer.

It is found in the secreted. It catalyses the reaction an [RNA] containing cytidine + H2O = an [RNA]-3'-cytidine-3'-phosphate + a 5'-hydroxy-ribonucleotide-3'-[RNA].. The catalysed reaction is an [RNA] containing uridine + H2O = an [RNA]-3'-uridine-3'-phosphate + a 5'-hydroxy-ribonucleotide-3'-[RNA].. Functionally, endonuclease that catalyzes the cleavage of RNA on the 3' side of pyrimidine nucleotides. Compared to RNASE1 it has lost activity towards dsRNA. In Pygathrix nemaeus (Red-shanked douc langur), this protein is Ribonuclease 1B pancreatic (RNASE1B).